The following is a 333-amino-acid chain: Glycerol-3-phosphate dehydrogenase [NAD(P)+] (333 aa).

NADPH-binding residues include W13, K33, and K108. Sn-glycerol 3-phosphate-binding residues include K108 and G138. An NADPH-binding site is contributed by S142. Sn-glycerol 3-phosphate-binding residues include K193, D246, S256, R257, and N258. K193 (proton acceptor) is an active-site residue. Residue R257 coordinates NADPH. NADPH is bound by residues V281 and E283.

It belongs to the NAD-dependent glycerol-3-phosphate dehydrogenase family.

It localises to the cytoplasm. The enzyme catalyses sn-glycerol 3-phosphate + NAD(+) = dihydroxyacetone phosphate + NADH + H(+). It carries out the reaction sn-glycerol 3-phosphate + NADP(+) = dihydroxyacetone phosphate + NADPH + H(+). Its pathway is membrane lipid metabolism; glycerophospholipid metabolism. Catalyzes the reduction of the glycolytic intermediate dihydroxyacetone phosphate (DHAP) to sn-glycerol 3-phosphate (G3P), the key precursor for phospholipid synthesis. This is Glycerol-3-phosphate dehydrogenase [NAD(P)+] from Bifidobacterium longum (strain NCC 2705).